The primary structure comprises 1101 residues: ATP-dependent DNA helicase mph1 (1101 aa).

Disordered stretches follow at residues 22–59, 95–138, 154–231, and 250–270; these read PGTSDTVESVQTNNRPAKQSDISISQGNEEDEFQSPDR, LTQP…QYHD, FEEE…TNRP, and SSQRGEQIFSPPEKSEPPTHH. The segment covering 24 to 48 has biased composition (polar residues); it reads TSDTVESVQTNNRPAKQSDISISQG. Low complexity predominate over residues 170–190; it reads TPARTAAAPCAAPKGTAADVP. Residues 191–202 are compositionally biased toward acidic residues; the sequence is FDLDDIPDDAFD. A compositionally biased stretch (polar residues) spans 209 to 228; that stretch reads PPRSTSQATRGPPVQSQFRT. In terms of domain architecture, Helicase ATP-binding spans 296 to 464; sequence IAQRGLFHNL…AIIDDLGIAK (169 aa). 309–316 is a binding site for ATP; that stretch reads LPTGLGKT. Positions 412–415 match the DEAH box motif; the sequence is DEAH. The Helicase C-terminal domain maps to 634-808; that stretch reads YLKQVVLNHF…GTRFTFHDDK (175 aa). Disordered regions lie at residues 824-890 and 991-1067; these read RQID…PTPE and SRDP…QDAF. Residues 842-854 are compositionally biased toward basic residues; the sequence is RRARPPKRPPKKF.

The protein belongs to the DEAD box helicase family. DEAH subfamily. FANCM sub-subfamily. In terms of assembly, interacts with the MHF histone-fold complex to form the FANCM-MHF complex.

The protein localises to the nucleus. The enzyme catalyses ATP + H2O = ADP + phosphate + H(+). Functionally, ATP-dependent DNA helicase involved in DNA damage repair by homologous recombination and in genome maintenance. Capable of unwinding D-loops. Plays a role in limiting crossover recombinants during mitotic DNA double-strand break (DSB) repair. Component of a FANCM-MHF complex which promotes gene conversion at blocked replication forks, probably by reversal of the stalled fork. The sequence is that of ATP-dependent DNA helicase mph1 from Aspergillus fumigatus (strain CBS 144.89 / FGSC A1163 / CEA10) (Neosartorya fumigata).